Reading from the N-terminus, the 192-residue chain is Xanthine phosphoribosyltransferase (192 aa).

The xanthine site is built by leucine 20 and asparagine 27. 128–132 (AQGEA) provides a ligand contact to 5-phospho-alpha-D-ribose 1-diphosphate. Lysine 156 serves as a coordination point for xanthine.

It belongs to the purine/pyrimidine phosphoribosyltransferase family. Xpt subfamily. As to quaternary structure, homodimer.

It is found in the cytoplasm. It carries out the reaction XMP + diphosphate = xanthine + 5-phospho-alpha-D-ribose 1-diphosphate. It participates in purine metabolism; XMP biosynthesis via salvage pathway; XMP from xanthine: step 1/1. Functionally, converts the preformed base xanthine, a product of nucleic acid breakdown, to xanthosine 5'-monophosphate (XMP), so it can be reused for RNA or DNA synthesis. In Lactobacillus helveticus (strain DPC 4571), this protein is Xanthine phosphoribosyltransferase.